The following is a 392-amino-acid chain: MSSLLLDNIGELVTNTAAGEGPLGIHRDAAVLVEDGVVAWVGPNGSAPAADRRIDAESAAVLPGFVDSHAHLVFAGDRAVEFAARMAGQPYTGGGIRTTVGATRAATDDELRATAHRLHAEALRQGTTTIEIKSGYGLTVVDEARSLRIAAEVSSETTFLGAHLVPAEYADRPDDYVDLVCGPMLAAAAPYARWVDVFCERGAFDADHTRAILTRGQAAGLGTRLHANQLGPGPGVQLGVELGVASVDHCTHLTDADVDALAGADGATVATLLPGAEFSTRSPYPDARRLLDAGVTVALATDCNPGSSYTSSVPFCIALAVREMRMSPSEAVWAATAGGAAALRRTDVGRLAPGSQADLMILDAPSHLHLAYRPGIPLIRQVLHNGVPQCRP.

Fe(3+)-binding residues include H69 and H71. Zn(2+) is bound by residues H69 and H71. Residues R78, Y136, and H163 each contribute to the 4-imidazolone-5-propanoate site. N-formimidoyl-L-glutamate is bound at residue Y136. H226 serves as a coordination point for Fe(3+). A Zn(2+)-binding site is contributed by H226. Q229 is a 4-imidazolone-5-propanoate binding site. Fe(3+) is bound at residue D302. Zn(2+) is bound at residue D302. N304 and G306 together coordinate N-formimidoyl-L-glutamate. Position 307 (S307) interacts with 4-imidazolone-5-propanoate.

Belongs to the metallo-dependent hydrolases superfamily. HutI family. Zn(2+) serves as cofactor. Fe(3+) is required as a cofactor.

Its subcellular location is the cytoplasm. It catalyses the reaction 4-imidazolone-5-propanoate + H2O = N-formimidoyl-L-glutamate. It participates in amino-acid degradation; L-histidine degradation into L-glutamate; N-formimidoyl-L-glutamate from L-histidine: step 3/3. In terms of biological role, catalyzes the hydrolytic cleavage of the carbon-nitrogen bond in imidazolone-5-propanoate to yield N-formimidoyl-L-glutamate. It is the third step in the universal histidine degradation pathway. The chain is Imidazolonepropionase from Salinispora tropica (strain ATCC BAA-916 / DSM 44818 / JCM 13857 / NBRC 105044 / CNB-440).